Reading from the N-terminus, the 846-residue chain is Envelope glycoprotein gp160 (846 aa).

Positions 1–31 (MRAREKERNCQNLWKWGIMLLGMLMTCSAAE) are cleaved as a signal peptide. The Extracellular portion of the chain corresponds to 32-674 (DLWVTVYYGV…ITKWLWYIKL (643 aa)). Cys53 and Cys73 are disulfide-bonded. Asn87, Asn129, Asn151, Asn179, Asn182, Asn229, Asn236, Asn257, Asn271, Asn284, and Asn290 each carry an N-linked (GlcNAc...) asparagine; by host glycan. 5 disulfide bridges follow: Cys118-Cys200, Cys125-Cys191, Cys130-Cys152, Cys213-Cys242, and Cys223-Cys234. Positions 130–151 (CTDELRNSKGNGKVEEEEKRKN) are V1. The tract at residues 152–191 (CSFNVRDKREQVYALFYKLDIVPIDNNNRTNSTNYRLINC) is V2. The interval 291–327 (CTRPYKYTRQRTSIGLRQSLYTITGKKKKTGYIGQAH) is V3. Residues Cys291 and Cys328 are joined by a disulfide bond. Asn351 is a glycosylation site (N-linked (GlcNAc...) asparagine; by host). The segment at 360–370 (SSGGDPEITSH) is CD4-binding loop. 2 disulfides stabilise this stretch: Cys374/Cys435 and Cys381/Cys408. The segment at 381-408 (CNTSRLFNSTWNQTNSTGFNNGTVTLPC) is V4. N-linked (GlcNAc...) asparagine; by host glycans are attached at residues Asn382, Asn388, Asn392, Asn395, Asn401, Asn438, Asn451, and Asn452. V5 regions lie at residues 450-461 (ANNSSHETIRPG) and 453-461 (SSHETIRPG). Positions 502-522 (AIGLGAVFLGFLGAAGSTMGA) are fusion peptide. The segment at 564 to 582 (KQLQARVLAVERYLRDQQL) is immunosuppression. Cys588 and Cys594 are disulfide-bonded. 4 N-linked (GlcNAc...) asparagine; by host glycosylation sites follow: Asn601, Asn606, Asn615, and Asn627. Residues 623–657 (REIDNYTGLIYSLIEESQIQQEKNEKELLELDKWA) are a coiled coil. Positions 652–673 (ELDKWASLWNWFSITKWLWYIK) are MPER; binding to GalCer. A helical membrane pass occupies residues 675 to 695 (FIMIVGGLIGLRIVFAVLSVV). The Cytoplasmic segment spans residues 696–846 (NRVRQGYSPL…IRQGLERLLL (151 aa)). The short motif at 702–705 (YSPL) is the YXXL motif; contains endocytosis signal element. S-palmitoyl cysteine; by host attachment occurs at residues Cys754 and Cys827. The Di-leucine internalization motif signature appears at 845-846 (LL).

The protein belongs to the HIV-1 env protein family. The mature envelope protein (Env) consists of a homotrimer of non-covalently associated gp120-gp41 heterodimers. The resulting complex protrudes from the virus surface as a spike. There seems to be as few as 10 spikes on the average virion. Interacts with host CD4, CCR5 and CXCR4. Gp120 also interacts with the C-type lectins CD209/DC-SIGN and CLEC4M/DC-SIGNR (collectively referred to as DC-SIGN(R)). Gp120 and gp41 interact with GalCer. Gp120 interacts with host ITGA4/ITGB7 complex; on CD4+ T-cells, this interaction results in rapid activation of integrin ITGAL/LFA-1, which facilitates efficient cell-to-cell spreading of HIV-1. Gp120 interacts with cell-associated heparan sulfate; this interaction increases virus infectivity on permissive cells and may be involved in infection of CD4- cells. As to quaternary structure, the mature envelope protein (Env) consists of a homotrimer of non-covalently associated gp120-gp41 heterodimers. The resulting complex protrudes from the virus surface as a spike. There seems to be as few as 10 spikes on the average virion. In terms of processing, highly glycosylated by host. The high number of glycan on the protein is reffered to as 'glycan shield' because it contributes to hide protein sequence from adaptive immune system. Post-translationally, palmitoylation of the transmembrane protein and of Env polyprotein (prior to its proteolytic cleavage) is essential for their association with host cell membrane lipid rafts. Palmitoylation is therefore required for envelope trafficking to classical lipid rafts, but not for viral replication. Specific enzymatic cleavages in vivo yield mature proteins. Envelope glycoproteins are synthesized as an inactive precursor that is heavily N-glycosylated and processed likely by host cell furin in the Golgi to yield the mature SU and TM proteins. The cleavage site between SU and TM requires the minimal sequence [KR]-X-[KR]-R. About 2 of the 9 disulfide bonds of gp41 are reduced by P4HB/PDI, following binding to CD4 receptor.

The protein localises to the virion membrane. The protein resides in the host cell membrane. It localises to the host endosome membrane. In terms of biological role, oligomerizes in the host endoplasmic reticulum into predominantly trimers. In a second time, gp160 transits in the host Golgi, where glycosylation is completed. The precursor is then proteolytically cleaved in the trans-Golgi and thereby activated by cellular furin or furin-like proteases to produce gp120 and gp41. Attaches the virus to the host lymphoid cell by binding to the primary receptor CD4. This interaction induces a structural rearrangement creating a high affinity binding site for a chemokine coreceptor like CXCR4 and/or CCR5. Acts as a ligand for CD209/DC-SIGN and CLEC4M/DC-SIGNR, which are respectively found on dendritic cells (DCs), and on endothelial cells of liver sinusoids and lymph node sinuses. These interactions allow capture of viral particles at mucosal surfaces by these cells and subsequent transmission to permissive cells. HIV subverts the migration properties of dendritic cells to gain access to CD4+ T-cells in lymph nodes. Virus transmission to permissive T-cells occurs either in trans (without DCs infection, through viral capture and transmission), or in cis (following DCs productive infection, through the usual CD4-gp120 interaction), thereby inducing a robust infection. In trans infection, bound virions remain infectious over days and it is proposed that they are not degraded, but protected in non-lysosomal acidic organelles within the DCs close to the cell membrane thus contributing to the viral infectious potential during DCs' migration from the periphery to the lymphoid tissues. On arrival at lymphoid tissues, intact virions recycle back to DCs' cell surface allowing virus transmission to CD4+ T-cells. Functionally, acts as a class I viral fusion protein. Under the current model, the protein has at least 3 conformational states: pre-fusion native state, pre-hairpin intermediate state, and post-fusion hairpin state. During fusion of viral and target intracellular membranes, the coiled coil regions (heptad repeats) assume a trimer-of-hairpins structure, positioning the fusion peptide in close proximity to the C-terminal region of the ectodomain. The formation of this structure appears to drive apposition and subsequent fusion of viral and target cell membranes. Complete fusion occurs in host cell endosomes and is dynamin-dependent, however some lipid transfer might occur at the plasma membrane. The virus undergoes clathrin-dependent internalization long before endosomal fusion, thus minimizing the surface exposure of conserved viral epitopes during fusion and reducing the efficacy of inhibitors targeting these epitopes. Membranes fusion leads to delivery of the nucleocapsid into the cytoplasm. This chain is Envelope glycoprotein gp160, found in Human immunodeficiency virus type 1 group M subtype D (isolate NDK) (HIV-1).